Reading from the N-terminus, the 305-residue chain is N-acetylmuramic acid 6-phosphate etherase (305 aa).

The 164-residue stretch at 54-217 (AVPQLERGGR…SSALMVRLGK (164 aa)) folds into the SIS domain. The Proton donor role is filled by Glu82. Glu113 is a catalytic residue.

Belongs to the GCKR-like family. MurNAc-6-P etherase subfamily. Homodimer.

The enzyme catalyses N-acetyl-D-muramate 6-phosphate + H2O = N-acetyl-D-glucosamine 6-phosphate + (R)-lactate. It participates in amino-sugar metabolism; N-acetylmuramate degradation. Specifically catalyzes the cleavage of the D-lactyl ether substituent of MurNAc 6-phosphate, producing GlcNAc 6-phosphate and D-lactate. This chain is N-acetylmuramic acid 6-phosphate etherase, found in Deinococcus radiodurans (strain ATCC 13939 / DSM 20539 / JCM 16871 / CCUG 27074 / LMG 4051 / NBRC 15346 / NCIMB 9279 / VKM B-1422 / R1).